A 636-amino-acid chain; its full sequence is DNA primase (636 aa).

The segment at 44–68 (CPFHDEKTPSFHVRPNHGHFHCFGC) adopts a CHC2-type zinc-finger fold. The region spanning 266 to 352 (HQAVVVEGYT…SGQSFVAVAA (87 aa)) is the Toprim domain. Residues glutamate 272, aspartate 323, and aspartate 325 each coordinate Mg(2+). The span at 443 to 459 (REEAKGGGRKDNNRRGQ) shows a compositional bias: basic and acidic residues. The disordered stretch occupies residues 443 to 481 (REEAKGGGRKDNNRRGQETAARPKPPPVQRPDPTDPTLW).

It belongs to the DnaG primase family. In terms of assembly, monomer. Interacts with DnaB. The cofactor is Zn(2+). It depends on Mg(2+) as a cofactor.

The enzyme catalyses ssDNA + n NTP = ssDNA/pppN(pN)n-1 hybrid + (n-1) diphosphate.. In terms of biological role, RNA polymerase that catalyzes the synthesis of short RNA molecules used as primers for DNA polymerase during DNA replication. In Mycolicibacterium smegmatis (strain ATCC 700084 / mc(2)155) (Mycobacterium smegmatis), this protein is DNA primase.